Reading from the N-terminus, the 2207-residue chain is Mediator of RNA polymerase II transcription subunit 13-like (2207 aa).

A compositionally biased stretch (polar residues) spans 337–355 (VQSAASHLGSQDGGMSTMH). 4 disordered regions span residues 337–368 (VQSAASHLGSQDGGMSTMHSPKRSRKTPPKLH), 384–403 (AQSKRSQMSTPTREEEAAHS), 431–479 (VGPS…KRPL), and 519–574 (KYDK…VPVN). The span at 356 to 368 (SPKRSRKTPPKLH) shows a compositional bias: basic residues. The segment covering 384–394 (AQSKRSQMSTP) has biased composition (polar residues). A compositionally biased stretch (low complexity) spans 442–453 (PGFSAGLPSSSS). Positions 463 to 475 (KTTERQEKGDKLQ) are enriched in basic and acidic residues. Residues 528–539 (SRNTSKQMNLNP) show a composition bias toward polar residues. Residues 546-555 (PISPLPPTLS) are compositionally biased toward pro residues. Phosphoserine occurs at positions 548 and 555. The LXXLL motif 1 motif lies at 664 to 668 (LQRLL). Positions 731–747 (GTEKDSLKKNKSEDGFG) are enriched in basic and acidic residues. Residues 731-767 (GTEKDSLKKNKSEDGFGTKDVTTPGHSTPVPDGKNAM) are disordered. 2 positions are modified to phosphoserine: S812 and S821. The tract at residues 816–847 (ELGAVSPALRSSKMPTVGTEERPPGKDGRAAG) is disordered. A compositionally biased stretch (basic and acidic residues) spans 834-844 (TEERPPGKDGR). S918 bears the Phosphoserine mark. Residues 1004–1091 (DPDYVNTPQM…STTRPLNSVE (88 aa)) form a disordered region. The segment covering 1009 to 1019 (NTPQMNTPVTL) has biased composition (polar residues). Positions 1020 to 1031 (NSAAPASNSGAG) are enriched in low complexity. Polar residues predominate over residues 1072-1087 (TDQGSPASTPSTTRPL). Positions 1224–1228 (LLLLL) match the LXXLL motif 2 motif. Residues 1379 to 1400 (LPIPTLLVGYDKEFLTISPFSL) form a leucine-zipper region. Disordered regions lie at residues 1523–1652 (LMPP…SVTE) and 2042–2077 (GNLHSSPNSSPVPSPGSPSGIGVGSHFQHSRSQGER). Positions 1541–1593 (PGNAGSLPSNSGSGAPPAGSAFNPTSSSSANPTTSSSSASSGPPGSSAASAPG) are enriched in low complexity. Composition is skewed to polar residues over residues 1612–1624 (QNPSAGGSSTDRT) and 1635–1649 (PGQSCTQSSQDGQDS). S2080 is subject to Phosphoserine.

The protein belongs to the Mediator complex subunit 13 family. Component of the Mediator complex, which is composed of MED1, MED4, MED6, MED7, MED8, MED9, MED10, MED11, MED12, MED13, MED13L, MED14, MED15, MED16, MED17, MED18, MED19, MED20, MED21, MED22, MED23, MED24, MED25, MED26, MED27, MED29, MED30, MED31, CCNC, CDK8 and CDC2L6/CDK11. The MED12, MED13, CCNC and CDK8 subunits form a distinct module termed the CDK8 module. Mediator containing the CDK8 module is less active than Mediator lacking this module in supporting transcriptional activation. Individual preparations of the Mediator complex lacking one or more distinct subunits have been variously termed ARC, CRSP, DRIP, PC2, SMCC and TRAP. As to expression, highly expressed in heart and weakly expressed in brain, spleen, lung, liver, kidney and testis.

Its subcellular location is the nucleus. Functionally, component of the Mediator complex, a coactivator involved in the regulated transcription of nearly all RNA polymerase II-dependent genes. Mediator functions as a bridge to convey information from gene-specific regulatory proteins to the basal RNA polymerase II transcription machinery. Mediator is recruited to promoters by direct interactions with regulatory proteins and serves as a scaffold for the assembly of a functional preinitiation complex with RNA polymerase II and the general transcription factors. This subunit may specifically regulate transcription of targets of the Wnt signaling pathway and SHH signaling pathway. The chain is Mediator of RNA polymerase II transcription subunit 13-like (Med13l) from Mus musculus (Mouse).